The primary structure comprises 234 residues: Small ribosomal subunit protein uS5 (234 aa).

The segment covering 1–10 (MEDIKTTTPE) has biased composition (polar residues). The disordered stretch occupies residues 1-69 (MEDIKTTTPE…KDGSGNKPNK (69 aa)). Basic and acidic residues predominate over residues 11-31 (VKNEENKTSEVKEGKALEKNN). The 64-residue stretch at 78–141 (LEEKIVGVKK…KSAKNNMYKV (64 aa)) folds into the S5 DRBM domain.

Belongs to the universal ribosomal protein uS5 family. In terms of assembly, part of the 30S ribosomal subunit. Contacts proteins S4 and S8.

In terms of biological role, with S4 and S12 plays an important role in translational accuracy. Functionally, located at the back of the 30S subunit body where it stabilizes the conformation of the head with respect to the body. This Malacoplasma penetrans (strain HF-2) (Mycoplasma penetrans) protein is Small ribosomal subunit protein uS5.